Reading from the N-terminus, the 176-residue chain is Large ribosomal subunit protein bL17m (176 aa).

A mitochondrion-targeting transit peptide spans 1-8 (MRLSLAAA).

The protein belongs to the bacterial ribosomal protein bL17 family. Component of the mitochondrial ribosome large subunit (39S) which comprises a 16S rRNA and about 50 distinct proteins.

It is found in the mitochondrion. This chain is Large ribosomal subunit protein bL17m (Mrpl17), found in Mus musculus (Mouse).